The chain runs to 280 residues: Diaminopimelate epimerase (280 aa).

Positions 11 and 64 each coordinate substrate. Cysteine 73 functions as the Proton donor in the catalytic mechanism. Substrate is bound by residues 74–75, asparagine 162, asparagine 195, and 213–214; these read GN and ER. The active-site Proton acceptor is the cysteine 222. 223-224 is a binding site for substrate; the sequence is GT.

Belongs to the diaminopimelate epimerase family. In terms of assembly, homodimer.

It localises to the cytoplasm. The catalysed reaction is (2S,6S)-2,6-diaminopimelate = meso-2,6-diaminopimelate. The protein operates within amino-acid biosynthesis; L-lysine biosynthesis via DAP pathway; DL-2,6-diaminopimelate from LL-2,6-diaminopimelate: step 1/1. Functionally, catalyzes the stereoinversion of LL-2,6-diaminopimelate (L,L-DAP) to meso-diaminopimelate (meso-DAP), a precursor of L-lysine and an essential component of the bacterial peptidoglycan. The sequence is that of Diaminopimelate epimerase from Pelotomaculum thermopropionicum (strain DSM 13744 / JCM 10971 / SI).